The following is a 227-amino-acid chain: Lysosomal-associated transmembrane protein 4B (227 aa).

4 helical membrane-spanning segments follow: residues 26–46 (ILLG…LLSA), 72–92 (MCIA…ATYG), 100–120 (WIIP…LVAI), and 153–173 (CLVL…GYLI). The interval 205–222 (PPYDDATAVTGTAKEPPP) is required for NEDD4 interaction.

The protein belongs to the LAPTM4/LAPTM5 transporter family. As to quaternary structure, homooligomer; upon reaching the lysosomes. Interacts with MCOLN1. Interacts with NEDD4; may play a role in the lysosomal sorting of LAPTM4B; enhances HGS association with NEDD4; mediates inhibition of EGFR degradation. Interacts with PIP5K1C; promotes SNX5 association with LAPTM4B; kinase activity of PIP5K1C is required; interaction is regulated by phosphatidylinositol 4,5-bisphosphate generated by PIP5K1C. Interacts with HGS; promotes HGS ubiquitination. Interacts with SNX5. Interacts with SLC3A2 and SLC7A5; recruits SLC3A2 and SLC7A5 to lysosomes to promote leucine uptake into these organelles and is required for mTORC1 activation. Interacts with LRRC32; decreases TGFB1 production in regulatory T cells. Interacts with BECN1; competes with EGFR for LAPTM4B binding; regulates EGFR activity. Interacts with EGFR; positively correlates with EGFR activation. Post-translationally, undergoes proteolytic cleavage following delivery to the lysosomes. Ubiquitinated by NEDD4.

It is found in the endomembrane system. The protein localises to the late endosome membrane. Its subcellular location is the cell membrane. It localises to the cell projection. The protein resides in the lysosome membrane. It is found in the endosome membrane. The protein localises to the endosome. Its subcellular location is the multivesicular body membrane. It localises to the multivesicular body lumen. Required for optimal lysosomal function. Blocks EGF-stimulated EGFR intraluminal sorting and degradation. Conversely by binding with the phosphatidylinositol 4,5-bisphosphate, regulates its PIP5K1C interaction, inhibits HGS ubiquitination and relieves LAPTM4B inhibition of EGFR degradation. Recruits SLC3A2 and SLC7A5 (the Leu transporter) to the lysosome, promoting entry of leucine and other essential amino acid (EAA) into the lysosome, stimulating activation of proton-transporting vacuolar (V)-ATPase protein pump (V-ATPase) and hence mTORC1 activation. Plays a role as negative regulator of TGFB1 production in regulatory T cells. Binds ceramide and facilitates its exit from late endosome in order to control cell death pathways. The protein is Lysosomal-associated transmembrane protein 4B of Rattus norvegicus (Rat).